Consider the following 364-residue polypeptide: Protein MGF 360-21R (364 aa).

Belongs to the asfivirus MGF 360 family.

In terms of biological role, plays a role in virus cell tropism, and may be required for efficient virus replication in macrophages. This African swine fever virus (isolate Pig/Kenya/KEN-50/1950) (ASFV) protein is Protein MGF 360-21R.